A 162-amino-acid polypeptide reads, in one-letter code: N5-carboxyaminoimidazole ribonucleotide mutase (162 aa).

Ser11, Asp14, and Arg41 together coordinate substrate.

It belongs to the AIR carboxylase family. Class I subfamily.

The catalysed reaction is 5-carboxyamino-1-(5-phospho-D-ribosyl)imidazole + H(+) = 5-amino-1-(5-phospho-D-ribosyl)imidazole-4-carboxylate. Its pathway is purine metabolism; IMP biosynthesis via de novo pathway; 5-amino-1-(5-phospho-D-ribosyl)imidazole-4-carboxylate from 5-amino-1-(5-phospho-D-ribosyl)imidazole (N5-CAIR route): step 2/2. Catalyzes the conversion of N5-carboxyaminoimidazole ribonucleotide (N5-CAIR) to 4-carboxy-5-aminoimidazole ribonucleotide (CAIR). In Bacillus subtilis (strain 168), this protein is N5-carboxyaminoimidazole ribonucleotide mutase.